We begin with the raw amino-acid sequence, 337 residues long: Formamidase (337 aa).

Positions 14–257 (VVIGLVQLQL…DEIITAEVRP (244 aa)) constitute a CN hydrolase domain. The active-site Proton acceptor is the E60. K129 (proton donor) is an active-site residue. C162 acts as the Nucleophile in catalysis.

Belongs to the carbon-nitrogen hydrolase superfamily. Aliphatic amidase family.

The enzyme catalyses formamide + H2O = formate + NH4(+). Functionally, is an aliphatic amidase with a restricted substrate specificity, as it only hydrolyzes formamide. This chain is Formamidase, found in Bradyrhizobium sp. (strain ORS 278).